We begin with the raw amino-acid sequence, 212 residues long: MHEEVQCGIDEAGRGPVIGPMVISIVCCKEEYLREIGVKDSKMLSRKRREYLFDKITKNCAYSYVVVSPETLNKDMASESLNKIEENYILELLSKAEGIVYIDCFDVIEERAEKYIREKSGKEVVCKHKADSIYPAVSAASIVSKVIRDREIDKIAEKYGFFGSGYPSDPRTIDFLRKAMQQGLDLRSVARIHWETYKKIKEDVESGQKKLF.

Residues 4-206 (EVQCGIDEAG…YKKIKEDVES (203 aa)) enclose the RNase H type-2 domain. The a divalent metal cation site is built by aspartate 10, glutamate 11, and aspartate 103.

It belongs to the RNase HII family. Mn(2+) serves as cofactor. It depends on Mg(2+) as a cofactor.

It is found in the cytoplasm. The catalysed reaction is Endonucleolytic cleavage to 5'-phosphomonoester.. Its function is as follows. Endonuclease that specifically degrades the RNA of RNA-DNA hybrids. The protein is Ribonuclease HII of Thermoplasma volcanium (strain ATCC 51530 / DSM 4299 / JCM 9571 / NBRC 15438 / GSS1).